Reading from the N-terminus, the 121-residue chain is Small ribosomal subunit protein uS10 (121 aa).

Serine 2 carries the post-translational modification N-acetylserine. Residues lysine 6, lysine 8, lysine 21, lysine 32, and lysine 101 each participate in a glycyl lysine isopeptide (Lys-Gly) (interchain with G-Cter in ubiquitin) cross-link.

This sequence belongs to the universal ribosomal protein uS10 family. In terms of assembly, component of the small ribosomal subunit (SSU). Mature yeast ribosomes consist of a small (40S) and a large (60S) subunit. The 40S small subunit contains 1 molecule of ribosomal RNA (18S rRNA) and 33 different proteins (encoded by 57 genes). The large 60S subunit contains 3 rRNA molecules (25S, 5.8S and 5S rRNA) and 46 different proteins (encoded by 81 genes). In terms of processing, ubiquitinated at Lys-6 and Lys-8 by HEL2, to activate the ribosome quality control (RQC) pathway in response to stalled ribosomes. N-terminally acetylated by acetyltransferase NatA. Also partially acetylated by NatC.

Its subcellular location is the cytoplasm. Its function is as follows. Component of the ribosome, a large ribonucleoprotein complex responsible for the synthesis of proteins in the cell. The small ribosomal subunit (SSU) binds messenger RNAs (mRNAs) and translates the encoded message by selecting cognate aminoacyl-transfer RNA (tRNA) molecules. The large subunit (LSU) contains the ribosomal catalytic site termed the peptidyl transferase center (PTC), which catalyzes the formation of peptide bonds, thereby polymerizing the amino acids delivered by tRNAs into a polypeptide chain. The nascent polypeptides leave the ribosome through a tunnel in the LSU and interact with protein factors that function in enzymatic processing, targeting, and the membrane insertion of nascent chains at the exit of the ribosomal tunnel. The chain is Small ribosomal subunit protein uS10 from Saccharomyces cerevisiae (strain ATCC 204508 / S288c) (Baker's yeast).